We begin with the raw amino-acid sequence, 513 residues long: ATP synthase subunit alpha (513 aa).

Position 169–176 (169–176) interacts with ATP; that stretch reads GDRQTGKT.

This sequence belongs to the ATPase alpha/beta chains family. As to quaternary structure, F-type ATPases have 2 components, CF(1) - the catalytic core - and CF(0) - the membrane proton channel. CF(1) has five subunits: alpha(3), beta(3), gamma(1), delta(1), epsilon(1). CF(0) has three main subunits: a(1), b(2) and c(9-12). The alpha and beta chains form an alternating ring which encloses part of the gamma chain. CF(1) is attached to CF(0) by a central stalk formed by the gamma and epsilon chains, while a peripheral stalk is formed by the delta and b chains.

It localises to the cell inner membrane. It carries out the reaction ATP + H2O + 4 H(+)(in) = ADP + phosphate + 5 H(+)(out). Its function is as follows. Produces ATP from ADP in the presence of a proton gradient across the membrane. The alpha chain is a regulatory subunit. The sequence is that of ATP synthase subunit alpha from Ruthia magnifica subsp. Calyptogena magnifica.